The following is a 466-amino-acid chain: Glutamate--tRNA ligase 2 (466 aa).

A 'HIGH' region motif is present at residues 9 to 19 (PSPTGYLHVGG). Residues 234–238 (PLSKR) carry the 'KMSKS' region motif. Lys-237 serves as a coordination point for ATP.

It belongs to the class-I aminoacyl-tRNA synthetase family. Glutamate--tRNA ligase type 1 subfamily. As to quaternary structure, monomer.

It is found in the cytoplasm. It carries out the reaction tRNA(Glu) + L-glutamate + ATP = L-glutamyl-tRNA(Glu) + AMP + diphosphate. In terms of biological role, catalyzes the attachment of glutamate to tRNA(Glu) in a two-step reaction: glutamate is first activated by ATP to form Glu-AMP and then transferred to the acceptor end of tRNA(Glu). In Pseudothermotoga lettingae (strain ATCC BAA-301 / DSM 14385 / NBRC 107922 / TMO) (Thermotoga lettingae), this protein is Glutamate--tRNA ligase 2.